Reading from the N-terminus, the 215-residue chain is Uracil phosphoribosyltransferase (215 aa).

Residue K30 to R34 coordinates GTP. 5-phospho-alpha-D-ribose 1-diphosphate is bound by residues R80, R105, and D139–T147. Residues I202 and G207 to A209 contribute to the uracil site. Position 208 (D208) interacts with 5-phospho-alpha-D-ribose 1-diphosphate.

The protein belongs to the UPRTase family. The cofactor is Mg(2+).

The catalysed reaction is UMP + diphosphate = 5-phospho-alpha-D-ribose 1-diphosphate + uracil. It functions in the pathway pyrimidine metabolism; UMP biosynthesis via salvage pathway; UMP from uracil: step 1/1. Its activity is regulated as follows. Allosterically activated by GTP. In terms of biological role, catalyzes the conversion of uracil and 5-phospho-alpha-D-ribose 1-diphosphate (PRPP) to UMP and diphosphate. The sequence is that of Uracil phosphoribosyltransferase from Metallosphaera sedula (strain ATCC 51363 / DSM 5348 / JCM 9185 / NBRC 15509 / TH2).